The primary structure comprises 240 residues: MLALLCSCLLLAAGASDAWTGEDSAEPNSDSAEWIRDMYAKVTEIWQEVMQRRDDDGALHAACQVQPSATLDAAQPRVTGVVLFRQLAPRAKLDAFFALEGFPTEPNSSSRAIHVHQFGDLSQGCESTGPHYNPLAVPHPQHPGDFGNFAVRDGSLWRYRAGLAASLAGPHSIVGRAVVVHAGEDDLGRGGNQASVENGNAGRRLACCVVGVCGPGLWERQAREHSERKKRRRESECKAA.

A signal peptide spans 1–18; that stretch reads MLALLCSCLLLAAGASDA. Intrachain disulfides connect C63/C208 and C125/C207. N107 is a glycosylation site (N-linked (GlcNAc...) asparagine). H114, H116, and H131 together coordinate Cu cation. The Zn(2+) site is built by H131, H139, H142, and D145. A Cu cation-binding site is contributed by H181. N-linked (Glc) (glycation) lysine; in vitro glycans are attached at residues K229 and K230.

It belongs to the Cu-Zn superoxide dismutase family. In terms of assembly, homotetramer. Directly interacts with ATP7A; this interaction is copper-dependent and is required for SOD3 activity. The cofactor is Cu cation. Zn(2+) is required as a cofactor. As to expression, expressed in blood vessels, heart, lung, kidney and placenta. Major SOD isoenzyme in extracellular fluids such as plasma, lymph and synovial fluid.

It is found in the secreted. The protein localises to the extracellular space. The protein resides in the golgi apparatus. It localises to the trans-Golgi network. It catalyses the reaction 2 superoxide + 2 H(+) = H2O2 + O2. Functionally, protect the extracellular space from toxic effect of reactive oxygen intermediates by converting superoxide radicals into hydrogen peroxide and oxygen. In Homo sapiens (Human), this protein is Extracellular superoxide dismutase [Cu-Zn] (SOD3).